We begin with the raw amino-acid sequence, 400 residues long: Nicotinate phosphoribosyltransferase (400 aa).

His220 is modified (phosphohistidine; by autocatalysis).

The protein belongs to the NAPRTase family. Transiently phosphorylated on a His residue during the reaction cycle. Phosphorylation strongly increases the affinity for substrates and increases the rate of nicotinate D-ribonucleotide production. Dephosphorylation regenerates the low-affinity form of the enzyme, leading to product release.

It carries out the reaction nicotinate + 5-phospho-alpha-D-ribose 1-diphosphate + ATP + H2O = nicotinate beta-D-ribonucleotide + ADP + phosphate + diphosphate. It participates in cofactor biosynthesis; NAD(+) biosynthesis; nicotinate D-ribonucleotide from nicotinate: step 1/1. Catalyzes the synthesis of beta-nicotinate D-ribonucleotide from nicotinate and 5-phospho-D-ribose 1-phosphate at the expense of ATP. The protein is Nicotinate phosphoribosyltransferase of Enterobacter sp. (strain 638).